We begin with the raw amino-acid sequence, 472 residues long: 3-isopropylmalate dehydratase large subunit (472 aa).

The [4Fe-4S] cluster site is built by C352, C413, and C416.

This sequence belongs to the aconitase/IPM isomerase family. LeuC type 1 subfamily. Heterodimer of LeuC and LeuD. [4Fe-4S] cluster is required as a cofactor.

The enzyme catalyses (2R,3S)-3-isopropylmalate = (2S)-2-isopropylmalate. It functions in the pathway amino-acid biosynthesis; L-leucine biosynthesis; L-leucine from 3-methyl-2-oxobutanoate: step 2/4. In terms of biological role, catalyzes the isomerization between 2-isopropylmalate and 3-isopropylmalate, via the formation of 2-isopropylmaleate. This chain is 3-isopropylmalate dehydratase large subunit, found in Laribacter hongkongensis (strain HLHK9).